The primary structure comprises 760 residues: Mitochondrial intermediate peptidase (760 aa).

The N-terminal 19 residues, Met1 to Phe19, are a transit peptide targeting the mitochondrion. His543 contributes to the Zn(2+) binding site. The active site involves Glu544. Residue His547 participates in Zn(2+) binding.

Belongs to the peptidase M3 family. Zn(2+) is required as a cofactor.

Its subcellular location is the mitochondrion matrix. It catalyses the reaction Release of an N-terminal octapeptide as second stage of processing of some proteins imported into the mitochondrion.. Cleaves proteins, imported into the mitochondrion, to their mature size. While most mitochondrial precursor proteins are processed to the mature form in one step by mitochondrial processing peptidase (MPP), the sequential cleavage by MIP of an octapeptide after initial processing by MPP is a required step for a subgroup of nuclear-encoded precursor proteins destined for the matrix or the inner membrane. In Leucoagaricus gongylophorus (Leaf-cutting ant fungus), this protein is Mitochondrial intermediate peptidase (OCT1).